Reading from the N-terminus, the 145-residue chain is uncharacterized protein (145 aa).

This is an uncharacterized protein from Deinococcus radiodurans (strain ATCC 13939 / DSM 20539 / JCM 16871 / CCUG 27074 / LMG 4051 / NBRC 15346 / NCIMB 9279 / VKM B-1422 / R1).